A 500-amino-acid polypeptide reads, in one-letter code: Serine/threonine protein phosphatase 2A 57 kDa regulatory subunit B' kappa isoform (500 aa).

The segment at Met-1–Arg-53 is disordered. The segment covering Leu-21 to Gly-37 has biased composition (polar residues).

The protein belongs to the phosphatase 2A regulatory subunit B56 family. In terms of assembly, PP2A consists of a common heteromeric enzyme, composed of a catalytic subunit (subunits C), a constant regulatory subunit (subunit A), and a variety of regulatory subunits such as subunits B (the R2/B/PR55/B55, R3/B''/PR72/PR130/PR59 and R5/B'/B56 families).

The protein localises to the cytoplasm. Functionally, the B regulatory subunit may modulate substrate selectivity and catalytic activity, and may also direct the localization of the catalytic enzyme to a particular subcellular compartment. The chain is Serine/threonine protein phosphatase 2A 57 kDa regulatory subunit B' kappa isoform (B'KAPPA) from Arabidopsis thaliana (Mouse-ear cress).